The primary structure comprises 1353 residues: Ankyrin repeat domain-containing protein 36B (1353 aa).

ANK repeat units lie at residues 19 to 48 (YHLK…DANK), 52 to 81 (KERT…ELNL), 85 to 114 (EDRT…DPNI), 118 to 147 (FGRT…NIEE), 151 to 180 (NEYQ…NVNA), and 184 to 213 (LGRS…DVFS). 2 disordered regions span residues 249–307 (PINS…KDSV) and 349–607 (MGGG…KATS). Polar residues predominate over residues 250–259 (INSNPVSPQK). Basic and acidic residues-rich tracts occupy residues 260-272 (QRAE…DKDS) and 295-306 (PAEKATSDEKDS). 2 stretches are compositionally biased toward polar residues: residues 355-367 (GTVS…ASKT) and 389-400 (GTVSSQKQQALK). 2 stretches are compositionally biased toward basic and acidic residues: residues 436–455 (TSDE…DGEI) and 471–491 (SVKE…EKSR). The span at 579–600 (VSNIPTEIKDGQQSGTVSSQKQ) shows a compositional bias: polar residues. Coiled coils occupy residues 731 to 762 (AEQD…QIHS), 821 to 908 (IKLK…YRIE), 937 to 1055 (SETD…DHDQ), and 1119 to 1344 (VFEH…LQHS).

It belongs to the ANKRD36 family.

This Homo sapiens (Human) protein is Ankyrin repeat domain-containing protein 36B (ANKRD36B).